An 838-amino-acid chain; its full sequence is Pentatricopeptide repeat-containing protein At4g19440, chloroplastic (838 aa).

Residues 1–32 (MAALLYFPKISSQMTSSHFISFSPMDLRRLSR) constitute a chloroplast transit peptide. 16 PPR repeats span residues 238–268 (SKTTCNILLTSLVRANEFQKCCEAFDVVCKG), 272–306 (DVYLFTTAINAFCKGGKVEEAVKLFSKMEEAGVAP), 307–341 (NVVTFNTVIDGLGMCGRYDEAFMFKEKMVERGMEP), 342–376 (TLITYSILVKGLTRAKRIGDAYFVLKEMTKKGFPP), 377–411 (NVIVYNNLIDSFIEAGSLNKAIEIKDLMVSKGLSL), 412–446 (TSSTYNTLIKGYCKNGQADNAERLLKEMLSIGFNV), 447–481 (NQGSFTSVICLLCSHLMFDSALRFVGEMLLRNMSP), 482–516 (GGGLLTTLISGLCKHGKHSKALELWFQFLNKGFVV), 517–551 (DTRTSNALLHGLCEAGKLDEAFRIQKEILGRGCVM), 552–586 (DRVSYNTLISGCCGKKKLDEAFMFLDEMVKRGLKP), 587–621 (DNYTYSILICGLFNMNKVEEAIQFWDDCKRNGMLP), 622–656 (DVYTYSVMIDGCCKAERTEEGQEFFDEMMSKNVQP), 657–691 (NTVVYNHLIRAYCRSGRLSMALELREDMKHKGISP), 692–726 (NSATYTSLIKGMSIISRVEEAKLLFEEMRMEGLEP), 727–761 (NVFHYTALIDGYGKLGQMVKVECLLREMHSKNVHP), and 762–796 (NKITYTVMIGGYARDGNVTEASRLLNEMREKGIVP).

This sequence belongs to the PPR family. P subfamily.

The protein resides in the plastid. Its subcellular location is the chloroplast. The chain is Pentatricopeptide repeat-containing protein At4g19440, chloroplastic from Arabidopsis thaliana (Mouse-ear cress).